Consider the following 403-residue polypeptide: Phosphoglycerate kinase (403 aa).

Substrate contacts are provided by residues 21 to 23 (DFN), Arg-36, 59 to 62 (HLGR), Arg-119, and Arg-154. ATP-binding positions include Lys-207, Gly-299, Glu-330, and 357-360 (GGDA).

This sequence belongs to the phosphoglycerate kinase family. As to quaternary structure, monomer.

It is found in the cytoplasm. It carries out the reaction (2R)-3-phosphoglycerate + ATP = (2R)-3-phospho-glyceroyl phosphate + ADP. The protein operates within carbohydrate degradation; glycolysis; pyruvate from D-glyceraldehyde 3-phosphate: step 2/5. The polypeptide is Phosphoglycerate kinase (Chlamydia caviae (strain ATCC VR-813 / DSM 19441 / 03DC25 / GPIC) (Chlamydophila caviae)).